A 107-amino-acid polypeptide reads, in one-letter code: Iron-sulfur cluster assembly protein CyaY (107 aa).

This sequence belongs to the frataxin family.

In terms of biological role, involved in iron-sulfur (Fe-S) cluster assembly. May act as a regulator of Fe-S biogenesis. In Yersinia pseudotuberculosis serotype O:1b (strain IP 31758), this protein is Iron-sulfur cluster assembly protein CyaY.